The chain runs to 1058 residues: Bromodomain-containing protein 1 (1058 aa).

The segment covering Met1–Ala12 has biased composition (basic residues). The tract at residues Met1 to Pro26 is disordered. Residues Leu31–Ser80 are interaction with KAT7/HBO1 and histones. The segment at His92–Ala116 is disordered. The residue at position 128 (Ser128) is a Phosphoserine. The segment at Asp214–Ser264 adopts a PHD-type 1 zinc-finger fold. Residues Pro268–Val301 form a C2HC pre-PHD-type zinc finger. The PHD-type 2 zinc-finger motif lies at Leu325–Thr389. An N6-acetyllysine mark is found at Lys368, Lys516, and Lys519. Residues Lys554 and Lys594 each participate in a glycyl lysine isopeptide (Lys-Gly) (interchain with G-Cter in SUMO2) cross-link. Positions Leu562–Ala666 constitute a Bromo domain. Disordered stretches follow at residues Leu755 to Gly776 and Leu791 to Phe868. Position 803 is a phosphoserine (Ser803). The segment covering Ser852–Ser867 has biased composition (low complexity). An N6-acetyllysine modification is found at Lys903. Arg906 is modified (phosphoserine). The PWWP domain maps to Pro929–Asp1012. Phosphoserine is present on residues Ser1052 and Ser1055.

As to quaternary structure, component of some HBO1 complex composed of KAT7/HBO1, MEAF6, ING4 and BRD1/BRPF2. Component of the MOZ/MORF complex composed at least of ING5, KAT6A, KAT6B, MEAF6 and one of BRPF1, BRD1/BRPF2 and BRPF3. Interacts (via PHD-type zinc finger domain) with unmodified histone H3. Interacts (via PWWP domain) with dimethylated and trimethylated 'Lys-79' on histone H3. In terms of tissue distribution, highly expressed in testis.

Its subcellular location is the nucleus. It localises to the chromosome. Its function is as follows. Scaffold subunit of various histone acetyltransferase (HAT) complexes, such as the MOZ/MORF and HBO1 complexes, that acts as a regulator of hematopoiesis. Plays a key role in HBO1 complex by directing KAT7/HBO1 specificity towards histone H3 'Lys-14' acetylation (H3K14ac), thereby promoting erythroid differentiation. The polypeptide is Bromodomain-containing protein 1 (Homo sapiens (Human)).